The chain runs to 329 residues: Malate dehydrogenase (329 aa).

12 to 18 serves as a coordination point for NAD(+); that stretch reads GAAGQIG. Substrate is bound by residues Arg-93 and Arg-99. Residues Asn-106, Gln-113, and 130–132 each bind NAD(+); that span reads VGN. Asn-132 and Arg-166 together coordinate substrate. The Proton acceptor role is filled by His-191.

It belongs to the LDH/MDH superfamily. MDH type 2 family.

The catalysed reaction is (S)-malate + NAD(+) = oxaloacetate + NADH + H(+). In terms of biological role, catalyzes the reversible oxidation of malate to oxaloacetate. The chain is Malate dehydrogenase from Aromatoleum aromaticum (strain DSM 19018 / LMG 30748 / EbN1) (Azoarcus sp. (strain EbN1)).